A 318-amino-acid polypeptide reads, in one-letter code: Cyclic AMP receptor-like protein F (318 aa).

The Extracellular portion of the chain corresponds to 1-3; sequence MKD. A helical transmembrane segment spans residues 4 to 24; that stretch reads IILIYMICAPISMIGSLFIII. At 25–38 the chain is on the cytoplasmic side; it reads TWLLYAKLKNSGSN. The helical transmembrane segment at 39 to 59 threads the bilayer; that stretch reads FIFFQAISDFFFTSKYIITII. Over 60–83 the chain is Extracellular; it reads FYYINIPQFSDETSSTDTNPYCFS. Residues Cys-81 and Cys-177 are joined by a disulfide bond. The helical transmembrane segment at 84–104 threads the bilayer; the sequence is LGLFSQFFGQATIMWSYTMTV. Topologically, residues 105-145 are cytoplasmic; sequence KVFHSYFEMKKKNNNNNIGSNNIGGGGGGNNSNKQNSIDKT. A helical membrane pass occupies residues 146-166; the sequence is LKWYHLFVWGFCLVNATIIGI. The Extracellular segment spans residues 167–187; the sequence is SKQYGPSSTGCWIVGANNPYR. Residues 188–208 form a helical membrane-spanning segment; it reads FFELVPLYFTITTSIIILILI. Residues 209 to 234 are Cytoplasmic-facing; sequence LVKMKKSKPSSLLPTESMRYNQQARE. The chain crosses the membrane as a helical span at residues 235-255; sequence FKIQLMKFVLIFIIFWLPATV. Topologically, residues 256–267 are extracellular; that stretch reads LRTLEYFGIEKT. A helical membrane pass occupies residues 268–288; it reads FFILLDAVSVSLQALANSLVW. Residues 289–318 lie on the Cytoplasmic side of the membrane; the sequence is ATSPQFLKLMKRKVVNKPNKQMEREYLINK.

This sequence belongs to the G-protein coupled receptor 5 family.

It is found in the membrane. Functionally, receptor for cAMP. This is Cyclic AMP receptor-like protein F (crlF) from Dictyostelium discoideum (Social amoeba).